A 530-amino-acid chain; its full sequence is Purine-cytosine permease FCY22 (530 aa).

Residue Thr46 is modified to Phosphothreonine. A run of 12 helical transmembrane segments spans residues 96–116 (MVIV…LNFG), 119–139 (VLVI…FSLF), 162–182 (FFSL…ISVS), 197–217 (CPIW…TFFG), 220–240 (VVHA…LVII), 263–283 (GVLS…TYAA), 298–318 (IFFS…ILGA), 345–365 (AILV…LLAL), 372–392 (VPGM…LAKI), 396–416 (VWTM…TYYF), 418–438 (GFME…IAIA), and 463–483 (LPIG…VALG).

It belongs to the purine-cytosine permease (2.A.39) family.

Its subcellular location is the membrane. Its function is as follows. Probable purine-cytosine permease. The chain is Purine-cytosine permease FCY22 (FCY22) from Saccharomyces cerevisiae (strain ATCC 204508 / S288c) (Baker's yeast).